The sequence spans 34 residues: MEVNILAFIATALFILVPTAFLLIIYVKTVSQSD.

Residues 5–25 (ILAFIATALFILVPTAFLLII) traverse the membrane as a helical segment.

It belongs to the PsbM family. As to quaternary structure, PSII is composed of 1 copy each of membrane proteins PsbA, PsbB, PsbC, PsbD, PsbE, PsbF, PsbH, PsbI, PsbJ, PsbK, PsbL, PsbM, PsbT, PsbX, PsbY, PsbZ, Psb30/Ycf12, at least 3 peripheral proteins of the oxygen-evolving complex and a large number of cofactors. It forms dimeric complexes.

It localises to the plastid. It is found in the chloroplast thylakoid membrane. In terms of biological role, one of the components of the core complex of photosystem II (PSII). PSII is a light-driven water:plastoquinone oxidoreductase that uses light energy to abstract electrons from H(2)O, generating O(2) and a proton gradient subsequently used for ATP formation. It consists of a core antenna complex that captures photons, and an electron transfer chain that converts photonic excitation into a charge separation. This subunit is found at the monomer-monomer interface. In Calycanthus floridus var. glaucus (Eastern sweetshrub), this protein is Photosystem II reaction center protein M.